The sequence spans 190 residues: Segregation and condensation protein B (190 aa).

This sequence belongs to the ScpB family. Homodimer. Homodimerization may be required to stabilize the binding of ScpA to the Smc head domains. Component of a cohesin-like complex composed of ScpA, ScpB and the Smc homodimer, in which ScpA and ScpB bind to the head domain of Smc. The presence of the three proteins is required for the association of the complex with DNA.

The protein resides in the cytoplasm. Participates in chromosomal partition during cell division. May act via the formation of a condensin-like complex containing Smc and ScpA that pull DNA away from mid-cell into both cell halves. This chain is Segregation and condensation protein B, found in Bacillus cereus (strain ATCC 10987 / NRS 248).